The chain runs to 252 residues: Imidazole glycerol phosphate synthase subunit HisF (252 aa).

Residues Asp-11 and Asp-130 contribute to the active site.

It belongs to the HisA/HisF family. As to quaternary structure, heterodimer of HisH and HisF.

It is found in the cytoplasm. It carries out the reaction 5-[(5-phospho-1-deoxy-D-ribulos-1-ylimino)methylamino]-1-(5-phospho-beta-D-ribosyl)imidazole-4-carboxamide + L-glutamine = D-erythro-1-(imidazol-4-yl)glycerol 3-phosphate + 5-amino-1-(5-phospho-beta-D-ribosyl)imidazole-4-carboxamide + L-glutamate + H(+). The protein operates within amino-acid biosynthesis; L-histidine biosynthesis; L-histidine from 5-phospho-alpha-D-ribose 1-diphosphate: step 5/9. Its function is as follows. IGPS catalyzes the conversion of PRFAR and glutamine to IGP, AICAR and glutamate. The HisF subunit catalyzes the cyclization activity that produces IGP and AICAR from PRFAR using the ammonia provided by the HisH subunit. This is Imidazole glycerol phosphate synthase subunit HisF from Aromatoleum aromaticum (strain DSM 19018 / LMG 30748 / EbN1) (Azoarcus sp. (strain EbN1)).